Here is a 120-residue protein sequence, read N- to C-terminus: UPF0102 protein PTH_1707 (120 aa).

Belongs to the UPF0102 family.

This is UPF0102 protein PTH_1707 from Pelotomaculum thermopropionicum (strain DSM 13744 / JCM 10971 / SI).